A 209-amino-acid chain; its full sequence is Pyridoxine/pyridoxamine 5'-phosphate oxidase (209 aa).

Residues 7–10 (REDY) and Lys-64 each bind substrate. FMN-binding positions include 59-64 (RIVLLK), 74-75 (FT), Arg-80, and Lys-81. Positions 121, 125, and 129 each coordinate substrate. FMN is bound by residues 138–139 (QS) and Trp-182. 188-190 (RLH) lines the substrate pocket. Arg-192 is a binding site for FMN.

The protein belongs to the pyridoxamine 5'-phosphate oxidase family. As to quaternary structure, homodimer. It depends on FMN as a cofactor.

It carries out the reaction pyridoxamine 5'-phosphate + O2 + H2O = pyridoxal 5'-phosphate + H2O2 + NH4(+). It catalyses the reaction pyridoxine 5'-phosphate + O2 = pyridoxal 5'-phosphate + H2O2. The protein operates within cofactor metabolism; pyridoxal 5'-phosphate salvage; pyridoxal 5'-phosphate from pyridoxamine 5'-phosphate: step 1/1. Its pathway is cofactor metabolism; pyridoxal 5'-phosphate salvage; pyridoxal 5'-phosphate from pyridoxine 5'-phosphate: step 1/1. Its function is as follows. Catalyzes the oxidation of either pyridoxine 5'-phosphate (PNP) or pyridoxamine 5'-phosphate (PMP) into pyridoxal 5'-phosphate (PLP). This Actinobacillus pleuropneumoniae serotype 5b (strain L20) protein is Pyridoxine/pyridoxamine 5'-phosphate oxidase.